Reading from the N-terminus, the 354-residue chain is Magnesium-protoporphyrin IX monomethyl ester [oxidative] cyclase 2 (354 aa).

Belongs to the AcsF family. Fe cation serves as cofactor.

It carries out the reaction Mg-protoporphyrin IX 13-monomethyl ester + 3 NADPH + 3 O2 + 2 H(+) = 3,8-divinyl protochlorophyllide a + 3 NADP(+) + 5 H2O. It participates in porphyrin-containing compound metabolism; chlorophyll biosynthesis (light-independent). In terms of biological role, catalyzes the formation of the isocyclic ring in chlorophyll biosynthesis. Mediates the cyclase reaction, which results in the formation of divinylprotochlorophyllide (Pchlide) characteristic of all chlorophylls from magnesium-protoporphyrin IX 13-monomethyl ester (MgPMME). The chain is Magnesium-protoporphyrin IX monomethyl ester [oxidative] cyclase 2 from Thermosynechococcus vestitus (strain NIES-2133 / IAM M-273 / BP-1).